The chain runs to 70 residues: U2-agatoxin-Ao1a (70 aa).

Positions 1 to 20 (MRAIISLFLISAMVFSMIQA) are cleaved as a signal peptide. Positions 21–34 (VPEEEGLQLSEDER) are excised as a propeptide. 3 disulfides stabilise this stretch: Cys-37-Cys-53, Cys-44-Cys-58, and Cys-52-Cys-68. Leu-69 bears the Leucine amide mark.

Belongs to the neurotoxin 01 (U2-agtx) family. Expressed by the venom gland.

The protein localises to the secreted. Insect active toxin causing rapid but reversible paralysis in crickets. No activity shown in mammals. Suppresses the excitatory postsynaptic potentials evoked in lobster neuromuscular synaptic preparations, possibly by blocking the presynaptic calcium channel. Induces instantaneous reversible paralysis when injected into crickets. Does not show effect on mammalian Cav2.1/CACNA1A, Cav2.2/CACNA1B and Cav2.3/CACNA1E. The chain is U2-agatoxin-Ao1a from Agelena orientalis (Funnel-web spider).